Reading from the N-terminus, the 304-residue chain is MQIVRALPDIAKTRTEFETYTLQWVGMEDIAVPLTLNIGGGKQQSLPAKANVYVSLDDAAEKGIHMSRLHAILNQLASQVCDKEGLDLLLRNMVASQGKISRSAKVELVFDLLLPKPSLLSNETGFQTYRIEIGGQCLSEKYDYSLKITVPYSSTCPCSAALSRQLFSDAIDNEFSTSRIDKQELLSWALTSTVATPHSQRSYAYLNLLLGNHGWPSLSSFIMQIEEAIGTPVQTMVKRTDEQEFARLNADNLMFCEDAARNVKTLLEQSSWIEDYWFKVEHQESLHAHNAVVIDQKYSKGAML.

The protein belongs to the GTP cyclohydrolase IV family.

It carries out the reaction GTP + H2O = 7,8-dihydroneopterin 3'-triphosphate + formate + H(+). The protein operates within cofactor biosynthesis; 7,8-dihydroneopterin triphosphate biosynthesis; 7,8-dihydroneopterin triphosphate from GTP: step 1/1. In terms of biological role, converts GTP to 7,8-dihydroneopterin triphosphate. This chain is GTP cyclohydrolase FolE2, found in Hahella chejuensis (strain KCTC 2396).